The sequence spans 658 residues: UvrABC system protein B (658 aa).

Positions 26-413 (EGINSGKKKQ…SPEVIEQIIR (388 aa)) constitute a Helicase ATP-binding domain. ATP is bound at residue 39-46 (GATGTGKT). Residues 92–115 (YYDYYQPEAYVPQTDTFIEKDAQI) carry the Beta-hairpin motif. The Helicase C-terminal domain occupies 430–596 (QIDDLLGEIQ…TIQKGVRDVI (167 aa)). A UVR domain is found at 622 to 657 (EKTIAKMEAEMKEAAKALDFERAAELRDLLLELKAE).

It belongs to the UvrB family. In terms of assembly, forms a heterotetramer with UvrA during the search for lesions. Interacts with UvrC in an incision complex.

It is found in the cytoplasm. Functionally, the UvrABC repair system catalyzes the recognition and processing of DNA lesions. A damage recognition complex composed of 2 UvrA and 2 UvrB subunits scans DNA for abnormalities. Upon binding of the UvrA(2)B(2) complex to a putative damaged site, the DNA wraps around one UvrB monomer. DNA wrap is dependent on ATP binding by UvrB and probably causes local melting of the DNA helix, facilitating insertion of UvrB beta-hairpin between the DNA strands. Then UvrB probes one DNA strand for the presence of a lesion. If a lesion is found the UvrA subunits dissociate and the UvrB-DNA preincision complex is formed. This complex is subsequently bound by UvrC and the second UvrB is released. If no lesion is found, the DNA wraps around the other UvrB subunit that will check the other stand for damage. The sequence is that of UvrABC system protein B from Bacillus cereus (strain ATCC 14579 / DSM 31 / CCUG 7414 / JCM 2152 / NBRC 15305 / NCIMB 9373 / NCTC 2599 / NRRL B-3711).